The primary structure comprises 317 residues: tRNA pseudouridine synthase B (317 aa).

Asp47 (nucleophile) is an active-site residue.

The protein belongs to the pseudouridine synthase TruB family. Type 1 subfamily.

The catalysed reaction is uridine(55) in tRNA = pseudouridine(55) in tRNA. Functionally, responsible for synthesis of pseudouridine from uracil-55 in the psi GC loop of transfer RNAs. The sequence is that of tRNA pseudouridine synthase B from Shewanella denitrificans (strain OS217 / ATCC BAA-1090 / DSM 15013).